Consider the following 498-residue polypeptide: Ribose import ATP-binding protein RbsA 1 (498 aa).

ABC transporter domains are found at residues Leu-7–Arg-243 and Pro-254–Ser-496. Residue Gly-39 to Ser-46 coordinates ATP.

Belongs to the ABC transporter superfamily. Ribose importer (TC 3.A.1.2.1) family. The complex is composed of an ATP-binding protein (RbsA), two transmembrane proteins (RbsC) and a solute-binding protein (RbsB).

It localises to the cell inner membrane. The catalysed reaction is D-ribose(out) + ATP + H2O = D-ribose(in) + ADP + phosphate + H(+). Functionally, part of the ABC transporter complex RbsABC involved in ribose import. Responsible for energy coupling to the transport system. This chain is Ribose import ATP-binding protein RbsA 1, found in Pasteurella multocida (strain Pm70).